The primary structure comprises 131 residues: Insulin-like 3 (131 aa).

An N-terminal signal peptide occupies residues 1–20 (MDPRLPAWALVLLGPALVFA). Disulfide bonds link Cys34-Cys116, Cys46-Cys129, and Cys115-Cys120. Positions 58–104 (PATGGDRELLQWLERRHLLHGLVADSNLTLGPGLQPLPQTSHHHRHH) are cleaved as a propeptide — c peptide like.

This sequence belongs to the insulin family. In terms of assembly, heterodimer of a B chain and an A chain linked by two disulfide bonds. In terms of tissue distribution, expressed in prenatal and postnatal Leydig cells. Found as well in the corpus luteum, trophoblast, fetal membranes and breast.

The protein localises to the secreted. Functionally, seems to play a role in testicular function. May be a trophic hormone with a role in testicular descent in fetal life. Is a ligand for LGR8 receptor. This chain is Insulin-like 3 (INSL3), found in Homo sapiens (Human).